Here is a 76-residue protein sequence, read N- to C-terminus: uORF2 protein (76 aa).

Its function is as follows. Plays a role in viral replication. The chain is uORF2 protein from Zika virus (isolate ZIKV/Human/French Polynesia/10087PF/2013) (ZIKV).